The sequence spans 378 residues: Glutamate 5-kinase (378 aa).

An ATP-binding site is contributed by Lys-19. Substrate contacts are provided by Ser-59, Asp-146, and Asn-158. Residue 178–179 participates in ATP binding; the sequence is TD. In terms of domain architecture, PUA spans 285 to 363; that stretch reads RGSVTVDPGA…SEFEKLLGYT (79 aa).

Belongs to the glutamate 5-kinase family.

The protein resides in the cytoplasm. It carries out the reaction L-glutamate + ATP = L-glutamyl 5-phosphate + ADP. The protein operates within amino-acid biosynthesis; L-proline biosynthesis; L-glutamate 5-semialdehyde from L-glutamate: step 1/2. Functionally, catalyzes the transfer of a phosphate group to glutamate to form L-glutamate 5-phosphate. This is Glutamate 5-kinase from Polaromonas naphthalenivorans (strain CJ2).